Reading from the N-terminus, the 579-residue chain is UPF0324 membrane protein DVU_0943 (579 aa).

10 helical membrane-spanning segments follow: residues 26 to 45 (YWAI…LFLA), 193 to 215 (AFNI…AIGM), 225 to 243 (FLVG…QMMG), 250 to 272 (YWGI…TVGT), 305 to 327 (IGIP…TFIF), 369 to 391 (LTLS…PAFI), 430 to 452 (AATI…AVYW), 473 to 495 (FPKF…GSLG), 515 to 533 (LRGW…ATNF), and 546 to 568 (LILY…YIMF).

This sequence belongs to the UPF0324 family.

It localises to the cell membrane. The sequence is that of UPF0324 membrane protein DVU_0943 from Nitratidesulfovibrio vulgaris (strain ATCC 29579 / DSM 644 / CCUG 34227 / NCIMB 8303 / VKM B-1760 / Hildenborough) (Desulfovibrio vulgaris).